The primary structure comprises 180 residues: Cell division protein SepF (180 aa).

Positions 14–81 (NSEDDEEFDN…SKITPISKSS (68 aa)) are disordered. Residues 15 to 35 (SEDDEEFDNEDYYLDDEEEEE) show a composition bias toward acidic residues. The segment covering 57 to 68 (TRRDTTPKEKPV) has biased composition (basic and acidic residues). A compositionally biased stretch (low complexity) spans 69 to 79 (KTTSKITPISK).

This sequence belongs to the SepF family. Homodimer. Interacts with FtsZ.

The protein localises to the cytoplasm. Its function is as follows. Cell division protein that is part of the divisome complex and is recruited early to the Z-ring. Probably stimulates Z-ring formation, perhaps through the cross-linking of FtsZ protofilaments. Its function overlaps with FtsA. The polypeptide is Cell division protein SepF (Agathobacter rectalis (strain ATCC 33656 / DSM 3377 / JCM 17463 / KCTC 5835 / VPI 0990) (Eubacterium rectale)).